A 623-amino-acid polypeptide reads, in one-letter code: AFI1-like protein C776.06c (623 aa).

Positions 5-204 (DYLLTAIFDP…IDNIPKPGSE (200 aa)) constitute a uDENN domain. Residues 248–386 (ISNLINTFID…SDATTTMDTK (139 aa)) form the cDENN domain. Residues 388–476 (LFNNTSPFTP…WSWDNDDEKV (89 aa)) enclose the dDENN domain.

Belongs to the AFI1/mesA family.

The protein localises to the cytoplasm. It is found in the cell cortex. Its subcellular location is the nucleus. Functionally, involved in polarity establishment. This is AFI1-like protein C776.06c from Schizosaccharomyces pombe (strain 972 / ATCC 24843) (Fission yeast).